Reading from the N-terminus, the 375-residue chain is Tyrosine--tRNA ligase (375 aa).

Residues Tyr-37, Tyr-168, Gln-172, Asp-175, and Gln-190 each coordinate L-tyrosine. The short motif at 251–255 (KMSKS) is the 'KMSKS' region element. Lys-254 contributes to the ATP binding site.

Belongs to the class-I aminoacyl-tRNA synthetase family. TyrS type 4 subfamily. Homodimer.

The protein resides in the cytoplasm. The catalysed reaction is tRNA(Tyr) + L-tyrosine + ATP = L-tyrosyl-tRNA(Tyr) + AMP + diphosphate + H(+). Functionally, catalyzes the attachment of tyrosine to tRNA(Tyr) in a two-step reaction: tyrosine is first activated by ATP to form Tyr-AMP and then transferred to the acceptor end of tRNA(Tyr). The polypeptide is Tyrosine--tRNA ligase (Thermococcus sibiricus (strain DSM 12597 / MM 739)).